A 633-amino-acid polypeptide reads, in one-letter code: MADSLDHAPAQANNLPQFLALTIGSIGVVYGDIGTSPLYAFREALRPFGPGGVGRDEVIGLVSLVLWTLTAIVTIKYVLFLLRADNDGEGGTLSLLALLLKKGTKYPVLMFFAGVLGAALFIGDAMITPALSVLSAVEGLKLVAPALHDYVLPISVVIILLLFAVQSRGTGAVSVFFGPITLVWFLVMAAAGVAHIGDDLAILSAFNPLNAIGFLWNAGLIGFIVLGAIFLTVTGAEALYADLGHFGRHSIQAAWFAVVFPALALNYLGQGALVLSHPDAISNPFFLMFPNWALLPMVILATAGTIIASQSVITGAFSLIRQAIHLGFLPRFEICYTSETQTGQIYLPLVNTILLTGVLALMLMFGSSEALAPAYGVSITGAMVIDTILAFEFVRRQWGWPALTAIAVLLPLFSLELIFLGANLFKIHHGGYVPILIAGTLIMMMWTWRKGVSLLREKTARQDVPLDQFIATVERKSEHAPVEVPGTAIFLTATPDTTPAVLLHNIKHNHVLHQHNVIMTIKTAKVPYVPEKDRYTITKLSDRFSLLELRFGFMDDQNVSRALVRCRKEGFRFEIMSTSFYLGRRKLIADPRSGLPQWQDKLFIAMADSAIDPTEYFHLPANRVVELGEQVII.

Helical transmembrane passes span 61 to 81 (LVSLVLWTLTAIVTIKYVLFL), 107 to 127 (PVLMFFAGVLGAALFIGDAMI), 143 to 163 (VAPALHDYVLPISVVIILLLF), 173 to 193 (VSVFFGPITLVWFLVMAAAGV), 211 to 231 (AIGFLWNAGLIGFIVLGAIFL), 255 to 275 (WFAVVFPALALNYLGQGALVL), 287 to 307 (LMFPNWALLPMVILATAGTII), 345 to 365 (IYLPLVNTILLTGVLALMLMF), 371 to 391 (LAPAYGVSITGAMVIDTILAF), 402 to 422 (ALTAIAVLLPLFSLELIFLGA), and 427 to 447 (IHHGGYVPILIAGTLIMMMWT).

It belongs to the HAK/KUP transporter (TC 2.A.72) family.

Its subcellular location is the cell inner membrane. The catalysed reaction is K(+)(in) + H(+)(in) = K(+)(out) + H(+)(out). Transport of potassium into the cell. Likely operates as a K(+):H(+) symporter. This chain is Probable potassium transport system protein Kup 3, found in Sinorhizobium medicae (strain WSM419) (Ensifer medicae).